We begin with the raw amino-acid sequence, 304 residues long: MLLPAVISFIVYAVFLQEANGHAAERADSRKPIWDIAHMVNDLGLVDEYLGDGANGLELDVAFTADGTADKMYHGVPCDCFRSCTRTEGFTKYMDYIRQLTTPGNSKFKSQLILLIMDLKLNGIEPNVAYAAGKSVAEKLLSGYWQNGKSGARAYIVLSLETITRPNFISGFRDAIKASGHEELFEKIGWDFSGNEDLGEIRRVYQKYGIEDHIWQGDGITNCLPRGDYRLTEAMKKKNDPNYKYTLKVYTWSIDKESSIRNALRLGVDAVMTNYPARVKSILRESEFSGTHRMATYDDNPWQK.

The N-terminal stretch at Met-1–Gly-21 is a signal peptide. A propeptide spanning residues His-22–Arg-26 is cleaved from the precursor. Residue His-38 is part of the active site. Positions 58 and 60 each coordinate Mg(2+). His-74 acts as the Nucleophile in catalysis. 2 disulfide bridges follow: Cys-78–Cys-84 and Cys-80–Cys-223. Mg(2+) is bound at residue Asp-118.

The protein belongs to the arthropod phospholipase D family. Class II subfamily. Class IIb sub-subfamily. Requires Mg(2+) as cofactor. As to expression, expressed by the venom gland.

The protein resides in the secreted. It carries out the reaction an N-(acyl)-sphingosylphosphocholine = an N-(acyl)-sphingosyl-1,3-cyclic phosphate + choline. The enzyme catalyses an N-(acyl)-sphingosylphosphoethanolamine = an N-(acyl)-sphingosyl-1,3-cyclic phosphate + ethanolamine. The catalysed reaction is a 1-acyl-sn-glycero-3-phosphocholine = a 1-acyl-sn-glycero-2,3-cyclic phosphate + choline. It catalyses the reaction a 1-acyl-sn-glycero-3-phosphoethanolamine = a 1-acyl-sn-glycero-2,3-cyclic phosphate + ethanolamine. In terms of biological role, dermonecrotic toxins cleave the phosphodiester linkage between the phosphate and headgroup of certain phospholipids (sphingolipid and lysolipid substrates), forming an alcohol (often choline) and a cyclic phosphate. This toxin acts on sphingomyelin (SM) with low activity. It may also act on ceramide phosphoethanolamine (CPE), lysophosphatidylcholine (LPC) and lysophosphatidylethanolamine (LPE), but not on lysophosphatidylserine (LPS), and lysophosphatidylglycerol (LPG). It acts by transphosphatidylation, releasing exclusively cyclic phosphate products as second products. Induces inflammatory response but no or very weak hemolysis, dermonecrosis, vascular permeability, edema, and cytotoxicity against renal epithelial cells. Causes swelling and erythema. In vivo, is not lethal to mice when intraperitoneally injected. This is Dermonecrotic toxin LiSicTox-betaIA1i from Loxosceles intermedia (Brown spider).